We begin with the raw amino-acid sequence, 400 residues long: Acetate kinase (400 aa).

N9 lines the Mg(2+) pocket. K16 provides a ligand contact to ATP. Position 90 (R90) interacts with substrate. D147 serves as the catalytic Proton donor/acceptor. Residues 207–211, 282–284, and 330–334 contribute to the ATP site; these read HIGNG, DLR, and GIGEN. E385 lines the Mg(2+) pocket.

It belongs to the acetokinase family. As to quaternary structure, homodimer. Mg(2+) serves as cofactor. The cofactor is Mn(2+).

The protein localises to the cytoplasm. The catalysed reaction is acetate + ATP = acetyl phosphate + ADP. It participates in metabolic intermediate biosynthesis; acetyl-CoA biosynthesis; acetyl-CoA from acetate: step 1/2. Catalyzes the formation of acetyl phosphate from acetate and ATP. Can also catalyze the reverse reaction. In Staphylococcus aureus (strain Mu3 / ATCC 700698), this protein is Acetate kinase.